A 145-amino-acid polypeptide reads, in one-letter code: Large ribosomal subunit protein uL16 (145 aa).

Residues 1–21 show a composition bias toward basic residues; the sequence is MLVPTRVKHRKQHRGRMHGKA. The interval 1 to 22 is disordered; the sequence is MLVPTRVKHRKQHRGRMHGKAT.

It belongs to the universal ribosomal protein uL16 family. In terms of assembly, part of the 50S ribosomal subunit.

Binds 23S rRNA and is also seen to make contacts with the A and possibly P site tRNAs. The sequence is that of Large ribosomal subunit protein uL16 from Desulfitobacterium hafniense (strain Y51).